The primary structure comprises 1059 residues: WD repeat-containing protein on Y chromosome (1059 aa).

WD repeat units lie at residues 121 to 161 (DFCP…ALTA), 170 to 209 (RSKTWVLDTVPLPDLSMFCVTGLETELRLYNVVAACFTLK), 214 to 256 (RLPQ…KVTT), 344 to 383 (CVPRGVTCFAFEPSNELLVSGGPDCDLRLWDIHRPEKPSV), 387 to 426 (GHTSSITFLFLQDAGEKIYSLDQRKIIKVWDVRNRVLLQT), 476 to 515 (SHTKPVSVLLYNGLYRLVVSCGFDSFIIVWDHRVNRKMTI), 528 to 567 (LEPVEITAACFDGKEQMLLTGARNGSLKIWNIGGRTCMRT), 616 to 658 (QHSD…RRYD), 714 to 759 (MRQL…GFKG), 766 to 805 (MAGDRIITLATDKANRFLFTGTALGYVKTWYIENCWIPNE), and 849 to 888 (AHRACVTGLTYLDDTGLLLSCSSDRTVRLWTLGGRYIGLL).

The sequence is that of WD repeat-containing protein on Y chromosome from Anopheles gambiae (African malaria mosquito).